We begin with the raw amino-acid sequence, 1377 residues long: Pleckstrin homology-like domain family B member 1 (1377 aa).

Phosphoserine is present on Ser51. The region spanning 64 to 125 (TVIGSAARDI…LTQGCMLCLG (62 aa)) is the FHA domain. Position 131 is an asymmetric dimethylarginine (Arg131). Residues 150–187 (RAPGPPYSPVPAESESLVNGNHTPQTATRGPSACASHS) are disordered. A compositionally biased stretch (polar residues) spans 165-178 (SLVNGNHTPQTATR). Residues Ser192, Ser220, and Ser223 each carry the phosphoserine modification. Disordered stretches follow at residues 211–334 (AAGK…LTDS) and 370–535 (GALS…GSFS). Low complexity predominate over residues 252-273 (SPAFSPLSSPASSGSCASHSPS). Residues 288–303 (RSSSYHLALQPPQSRP) show a composition bias toward polar residues. A compositionally biased stretch (basic and acidic residues) spans 309–322 (ESPRLSRKGGHERP). Phosphoserine occurs at positions 324, 334, 381, 404, 430, 443, 461, 470, 489, and 501. Residues 456–473 (ELPPLSPSLSRRALSPLP) are compositionally biased toward low complexity. Over residues 481 to 491 (KLNREVAESPR) the composition is skewed to basic and acidic residues. Residue Arg512 is modified to Omega-N-methylarginine. Phosphoserine is present on residues Ser518 and Ser520. A Phosphothreonine modification is found at Thr522. 7 positions are modified to phosphoserine: Ser533, Ser539, Ser551, Ser555, Ser563, Ser578, and Ser583. Over residues 653-663 (PSRGLAGASGR) the composition is skewed to low complexity. 3 disordered regions span residues 653-707 (PSRG…APST), 936-1019 (TGPA…GSLP), and 1119-1138 (SMET…DNMS). Residues 677–691 (ESMERSDEENLKEEC) are compositionally biased toward basic and acidic residues. Ser678 carries the phosphoserine modification. Residues 683 to 809 (DEENLKEECS…TETKLFEDLE (127 aa)) are a coiled coil. A phosphoserine mark is found at Ser971 and Ser1017. Over residues 971–992 (SPLPRTRSGPLPSSSGSSSSSS) the composition is skewed to low complexity. The span at 1009–1018 (LLTQNGTGSL) shows a compositional bias: polar residues. Residues 1144–1208 (DMGKIEEMEK…ARRQQLVEKE (65 aa)) adopt a coiled-coil conformation. The 115-residue stretch at 1256-1370 (SKVCRGYLVK…WMDVIVTGAE (115 aa)) folds into the PH domain.

This is Pleckstrin homology-like domain family B member 1 (PHLDB1) from Homo sapiens (Human).